Consider the following 296-residue polypeptide: tRNA dimethylallyltransferase (296 aa).

Residue Gly-2 to Thr-9 coordinates ATP. Thr-4–Thr-9 contributes to the substrate binding site. Interaction with substrate tRNA stretches follow at residues Asp-27–Leu-30, Gln-151–Arg-155, and Arg-232–Arg-237.

The protein belongs to the IPP transferase family. As to quaternary structure, monomer. Requires Mg(2+) as cofactor.

It catalyses the reaction adenosine(37) in tRNA + dimethylallyl diphosphate = N(6)-dimethylallyladenosine(37) in tRNA + diphosphate. Catalyzes the transfer of a dimethylallyl group onto the adenine at position 37 in tRNAs that read codons beginning with uridine, leading to the formation of N6-(dimethylallyl)adenosine (i(6)A). This is tRNA dimethylallyltransferase from Shewanella frigidimarina (strain NCIMB 400).